Consider the following 238-residue polypeptide: Ribonuclease PH (238 aa).

Phosphate-binding positions include R86 and 124-126 (GTR).

The protein belongs to the RNase PH family. Homohexameric ring arranged as a trimer of dimers.

It catalyses the reaction tRNA(n+1) + phosphate = tRNA(n) + a ribonucleoside 5'-diphosphate. Phosphorolytic 3'-5' exoribonuclease that plays an important role in tRNA 3'-end maturation. Removes nucleotide residues following the 3'-CCA terminus of tRNAs; can also add nucleotides to the ends of RNA molecules by using nucleoside diphosphates as substrates, but this may not be physiologically important. Probably plays a role in initiation of 16S rRNA degradation (leading to ribosome degradation) during starvation. The chain is Ribonuclease PH from Aliivibrio fischeri (strain ATCC 700601 / ES114) (Vibrio fischeri).